The following is a 234-amino-acid chain: Large ribosomal subunit protein uL1 (234 aa).

This sequence belongs to the universal ribosomal protein uL1 family. Part of the 50S ribosomal subunit.

Its function is as follows. Binds directly to 23S rRNA. The L1 stalk is quite mobile in the ribosome, and is involved in E site tRNA release. In terms of biological role, protein L1 is also a translational repressor protein, it controls the translation of the L11 operon by binding to its mRNA. In Tolumonas auensis (strain DSM 9187 / NBRC 110442 / TA 4), this protein is Large ribosomal subunit protein uL1.